The chain runs to 227 residues: Ras-related protein Rab-3C (227 aa).

9 residues coordinate GTP: S39, G42, K43, T44, S45, T56, S57, S61, and T62. Residue T44 participates in Mg(2+) binding. The Switch 1 signature appears at 53–66; it reads DSFTSAFVSTVGID. The Mg(2+) site is built by T62 and D85. Residue T86 is modified to Phosphothreonine; by LRRK2. Residues 86–104 carry the Switch 2 motif; sequence TAGQERYRTITTAYYRGAM. 6 residues coordinate GTP: G88, N143, K144, D146, A174, and K175. Residues S196 and S198 each carry the phosphoserine modification. Residues 202–227 are disordered; that stretch reads DPAITAAKQSTRLKETPPPPQPNCGC. The residue at position 206 (T206) is a Phosphothreonine. Residues 217-227 show a composition bias toward pro residues; sequence TPPPPQPNCGC. 2 S-geranylgeranyl cysteine lipidation sites follow: C225 and C227. C227 bears the Cysteine methyl ester mark.

Belongs to the small GTPase superfamily. Rab family. In terms of assembly, interacts with RIMS1, RIMS2, RPH3A and RPH3AL. Interacts with GDI2, CHM and CHML; phosphorylation at Thr-86 disrupts these interactions. Interacts with MADD (via uDENN domain); the GTP-bound form is preferred for interaction. Mg(2+) is required as a cofactor. Phosphorylation of Thr-86 in the switch II region by LRRK2 prevents the association of RAB regulatory proteins, including CHM, CHML and RAB GDP dissociation inhibitor GDI2.

It localises to the cell membrane. The enzyme catalyses GTP + H2O = GDP + phosphate + H(+). Regulated by guanine nucleotide exchange factors (GEFs) which promote the exchange of bound GDP for free GTP. Regulated by GTPase activating proteins (GAPs) which increase the GTP hydrolysis activity. Inhibited by GDP dissociation inhibitors (GDIs) which prevent Rab-GDP dissociation. Its function is as follows. The small GTPases Rab are key regulators of intracellular membrane trafficking, from the formation of transport vesicles to their fusion with membranes. Rabs cycle between an inactive GDP-bound form and an active GTP-bound form that is able to recruit to membranes different sets of downstream effectors directly responsible for vesicle formation, movement, tethering and fusion. This chain is Ras-related protein Rab-3C, found in Mus musculus (Mouse).